A 118-amino-acid polypeptide reads, in one-letter code: Small ribosomal subunit protein bS6 (118 aa).

The segment at 98–118 (TAAPAAKVAPVETAPAAEAAE) is disordered. Low complexity predominate over residues 99–118 (AAPAAKVAPVETAPAAEAAE).

Belongs to the bacterial ribosomal protein bS6 family.

Functionally, binds together with bS18 to 16S ribosomal RNA. The protein is Small ribosomal subunit protein bS6 of Geobacter metallireducens (strain ATCC 53774 / DSM 7210 / GS-15).